The sequence spans 460 residues: tRNA modification GTPase MnmE (460 aa).

(6S)-5-formyl-5,6,7,8-tetrahydrofolate is bound by residues arginine 29, glutamate 86, and lysine 126. The TrmE-type G domain occupies 222–383 (GMRVVIAGRP…LAEHLKECMG (162 aa)). K(+) is bound at residue asparagine 232. GTP is bound by residues 232–237 (NAGKSS), 251–257 (TAIAGTT), 276–279 (DTAG), and 341–344 (NKAD). Serine 236 is a binding site for Mg(2+). 3 residues coordinate K(+): threonine 251, isoleucine 253, and threonine 256. Threonine 257 serves as a coordination point for Mg(2+). Lysine 460 provides a ligand contact to (6S)-5-formyl-5,6,7,8-tetrahydrofolate.

Belongs to the TRAFAC class TrmE-Era-EngA-EngB-Septin-like GTPase superfamily. TrmE GTPase family. In terms of assembly, homodimer. Heterotetramer of two MnmE and two MnmG subunits. Requires K(+) as cofactor.

It localises to the cytoplasm. Functionally, exhibits a very high intrinsic GTPase hydrolysis rate. Involved in the addition of a carboxymethylaminomethyl (cmnm) group at the wobble position (U34) of certain tRNAs, forming tRNA-cmnm(5)s(2)U34. The protein is tRNA modification GTPase MnmE of Pseudoalteromonas atlantica (strain T6c / ATCC BAA-1087).